A 318-amino-acid polypeptide reads, in one-letter code: tRNA uridine(34) hydroxylase (318 aa).

Residues 123–217 (EDDDTVIIDA…YGKDPETKGQ (95 aa)) form the Rhodanese domain. Residue C177 is the Cysteine persulfide intermediate of the active site.

The protein belongs to the TrhO family.

It catalyses the reaction uridine(34) in tRNA + AH2 + O2 = 5-hydroxyuridine(34) in tRNA + A + H2O. Catalyzes oxygen-dependent 5-hydroxyuridine (ho5U) modification at position 34 in tRNAs. This chain is tRNA uridine(34) hydroxylase, found in Staphylococcus aureus (strain MRSA252).